Reading from the N-terminus, the 283-residue chain is Pantothenate synthetase (283 aa).

Met-30–His-37 serves as a coordination point for ATP. His-37 acts as the Proton donor in catalysis. Position 61 (Gln-61) interacts with (R)-pantoate. Residue Gln-61 participates in beta-alanine binding. Gly-149–Asp-152 is an ATP binding site. A (R)-pantoate-binding site is contributed by Gln-155. Residues Ile-178 and Met-186–Arg-189 contribute to the ATP site.

It belongs to the pantothenate synthetase family. In terms of assembly, homodimer.

It is found in the cytoplasm. It carries out the reaction (R)-pantoate + beta-alanine + ATP = (R)-pantothenate + AMP + diphosphate + H(+). Its pathway is cofactor biosynthesis; (R)-pantothenate biosynthesis; (R)-pantothenate from (R)-pantoate and beta-alanine: step 1/1. Catalyzes the condensation of pantoate with beta-alanine in an ATP-dependent reaction via a pantoyl-adenylate intermediate. The sequence is that of Pantothenate synthetase from Shewanella pealeana (strain ATCC 700345 / ANG-SQ1).